A 70-amino-acid polypeptide reads, in one-letter code: Conotoxin AbVIC (70 aa).

Positions 1 to 17 are cleaved as a signal peptide; the sequence is VLIIAVLFLTACQLTTA. Positions 18 to 41 are excised as a propeptide; sequence ETSSRGKQKHRALRSTDKNSKLTR. Residues 19–41 form a disordered region; it reads TSSRGKQKHRALRSTDKNSKLTR. 3 disulfide bridges follow: C43/C57, C50/C61, and C56/C68.

The protein belongs to the conotoxin O1 superfamily. In terms of tissue distribution, expressed by the venom duct.

The protein resides in the secreted. In Conus abbreviatus (Abbreviated cone), this protein is Conotoxin AbVIC.